We begin with the raw amino-acid sequence, 566 residues long: MTKKLTPQEKKNRKPAVRACVFCHQKHLQCSNERPCKNCVKRNIAHGCQDIVRKRVKYLTGESVPGAVSNKQSTPRKKLKTGPVSTSVSPMDSVKSELTTPVESSNHFPPPMSSSVDALPTTQHSAIEIPPNDQPISDILEVPPLFDSSHMISSEAPETNITLTTQNLITPDPLSFHTNTVSNTTTDVLNKLLNDNYETESMLSANNSNGDHLLGMAHTSSGHLSNGQQFQSNYLNEEYMMLGDIILQSKQASPSPSNTSTSENNTNTLSPSSFGYISNINFEDFNQPKRKVVQKLKDSRPFISLGFTADLAPHDNNNNTDYYDDKMTNNITGKTEEGPGNPIINYNTKFTTDYVPPSITNNLYKTASDLYSKELKNFYYPLSYHALTKLLKVIFGGNDLSPEEKQEKRSKLLIILKLIASYRPTFIAAHRDLIQEDLLMLEMTLQRSLLDYKKLAELNSSPTIMWRRTGEIISITEDMALLLEHSSFDLLKERRFIFELMDDNSIVDYFNLFANIAVGNLKSVIQTAIQMKTKSSNLIKFTCVFTIKRDIFDIPMIVIGQFLPIV.

Positions 20 to 48 (CVFCHQKHLQCSNERPCKNCVKRNIAHGC) form a DNA-binding region, zn(2)-C6 fungal-type. Disordered regions lie at residues 65-93 (PGAVSNKQSTPRKKLKTGPVSTSVSPMDS) and 250-270 (KQASPSPSNTSTSENNTNTLS). Polar residues predominate over residues 83 to 93 (PVSTSVSPMDS). Low complexity predominate over residues 253 to 270 (SPSPSNTSTSENNTNTLS).

The protein belongs to the ERT1/acuK family.

The protein resides in the nucleus. Its function is as follows. Transcription factor which regulates nonfermentable carbon utilization. The sequence is that of Glucose starvation modulator protein 1 (ZCF23) from Candida albicans (strain SC5314 / ATCC MYA-2876) (Yeast).